A 494-amino-acid chain; its full sequence is GTPase Der (494 aa).

EngA-type G domains lie at 2-164 (KKIA…PEED) and 235-407 (IKIS…KNYS). GTP contacts are provided by residues 8–15 (GRPNVGKS), 55–59 (DTGGL), 116–119 (NKID), 241–248 (GRTNVGKS), 288–292 (DTAGL), and 352–355 (NKWD). Residues 408–492 (QHIKTSELNV…PVLFKAKKRG (85 aa)) form the KH-like domain.

It belongs to the TRAFAC class TrmE-Era-EngA-EngB-Septin-like GTPase superfamily. EngA (Der) GTPase family. In terms of assembly, associates with the 50S ribosomal subunit.

Its function is as follows. GTPase that plays an essential role in the late steps of ribosome biogenesis. This is GTPase Der from Sulfurimonas denitrificans (strain ATCC 33889 / DSM 1251) (Thiomicrospira denitrificans (strain ATCC 33889 / DSM 1251)).